The sequence spans 449 residues: Putative methylthiotransferase MJ0865 (449 aa).

Positions 163 to 390 (SIRGANVYIE…EGEYRKLGLS (228 aa)) constitute a Radical SAM core domain. Residues Cys-177, Cys-181, and Cys-184 each coordinate [4Fe-4S] cluster.

This sequence belongs to the methylthiotransferase family. [4Fe-4S] cluster serves as cofactor.

The polypeptide is Putative methylthiotransferase MJ0865 (Methanocaldococcus jannaschii (strain ATCC 43067 / DSM 2661 / JAL-1 / JCM 10045 / NBRC 100440) (Methanococcus jannaschii)).